The following is a 131-amino-acid chain: Profilin (131 aa).

Belongs to the profilin family. Occurs in many kinds of cells as a complex with monomeric actin in a 1:1 ratio.

Its subcellular location is the cytoplasm. It localises to the cytoskeleton. Functionally, binds to actin and affects the structure of the cytoskeleton. At high concentrations, profilin prevents the polymerization of actin, whereas it enhances it at low concentrations. By binding to PIP2, it inhibits the formation of IP3 and DG. This Fragaria ananassa (Strawberry) protein is Profilin.